The chain runs to 712 residues: Solute carrier organic anion transporter family member 1C1 (712 aa).

Residues 1 to 43 lie on the Cytoplasmic side of the membrane; that stretch reads MDTSSKENIQLFCKTSVQPVGRPSFKTEYPSSEEKQPCCGELK. A helical transmembrane segment spans residues 44 to 63; sequence VFLCALSFVYFAKALAEGYL. The Extracellular portion of the chain corresponds to 64 to 82; that stretch reads KSTITQIERRFDIPSSLVG. Residues 83-103 form a helical membrane-spanning segment; the sequence is VIDGSFEIGNLLVITFVSYFG. Residues 104–109 lie on the Cytoplasmic side of the membrane; the sequence is AKLHRP. The helical transmembrane segment at 110-134 threads the bilayer; the sequence is KIIGAGCVIMGVGTLLIAMPQFFME. The Extracellular portion of the chain corresponds to 135–184; that stretch reads QYKYERYSPSSNSTLSISPCLLESSSQLPVSVMEKSKSKISNECEVDTSS. Residue asparagine 146 is glycosylated (N-linked (GlcNAc...) asparagine). A helical transmembrane segment spans residues 185-213; that stretch reads SMWIYVFLGNLLRGIGETPIQPLGIAYLD. Residues 214-232 are Cytoplasmic-facing; it reads DFASEDNAAFYIGCVQTVA. Residues 233 to 253 traverse the membrane as a helical segment; that stretch reads IIGPIFGFLLGSLCAKLYVDI. The Extracellular segment spans residues 254 to 271; that stretch reads GFVNLDHITITPKDPQWV. A helical membrane pass occupies residues 272-296; that stretch reads GAWWLGYLIAGIISLLAAVPFWYLP. At 297 to 348 the chain is on the cytoplasmic side; it reads KSLPRSQSREDSNSSSEKSKFIIDDHTDYQTPQGENAKIMEMARDFLPSLKN. The helical transmembrane segment at 349 to 370 threads the bilayer; that stretch reads LFGNPVYFLYLCTSTVQFNSLF. Topologically, residues 371–390 are extracellular; the sequence is GMVTYKPKYIEQQYGQSSSR. The helical transmembrane segment at 391-414 threads the bilayer; that stretch reads ANFVIGLINIPAVALGIFSGGIVM. Residues 415-418 are Cytoplasmic-facing; the sequence is KKFR. The chain crosses the membrane as a helical span at residues 419–442; sequence ISVCGAAKLYLGSSVFGYLLFLSL. At 443–554 the chain is on the extracellular side; the sequence is FALGCENSDV…NGCPQMFLYF (112 aa). Positions 470–525 constitute a Kazal-like domain; sequence RALFSDCNSRCKCSETKWEPMCGENGITYVSACLAGCQTSNRSGKNIIFYNCTCVG. Intrachain disulfides connect cysteine 476–cysteine 506, cysteine 482–cysteine 502, and cysteine 491–cysteine 523. Residues asparagine 510, asparagine 520, and asparagine 533 are each glycosylated (N-linked (GlcNAc...) asparagine). The chain crosses the membrane as a helical span at residues 555–577; the sequence is LVISVITSYTLSLGGIPGYILLL. Over 578 to 586 the chain is Cytoplasmic; it reads RCIKPQLKS. A helical membrane pass occupies residues 587–612; the sequence is FALGIYTLAIRVLAGIPAPVYFGVLI. Residues 613-646 are Extracellular-facing; it reads DTSCLKWGFKRCGSRGSCRLYDSNVFRHIYLGLT. Residues 647–664 form a helical membrane-spanning segment; it reads VILGTVSILLSIAVLFIL. Residues 665–712 are Cytoplasmic-facing; sequence KKNYVSKHRSFITKRERTMVSTRFQKENYTTSDHLLQPNYWPGKETQL.

This sequence belongs to the organo anion transporter (TC 2.A.60) family. As to expression, highly expressed in brain and in Leydig cells in testis. Localized in nests of Leydig cells (at protein level). Expressed in choroid plexus (at protein level). Not strongly enriched in cerebral microvessels.

The protein localises to the cell membrane. It carries out the reaction 3,3',5'-triiodo-L-thyronine(out) = 3,3',5'-triiodo-L-thyronine(in). The enzyme catalyses L-thyroxine(out) = L-thyroxine(in). It catalyses the reaction L-thyroxine sulfate(out) = L-thyroxine sulfate(in). In terms of biological role, mediates the Na(+)-independent high affinity transport of organic anions such as the thyroid hormones L-thyroxine (T4), L-thyroxine sulfate (T4S), and 3,3',5'-triiodo-L-thyronine (reverse T3, rT3) at the plasma membrane. Regulates T4 levels in different brain regions by transporting T4, and also by serving as an export pump for T4S, which is a source of T4 after hydrolysis by local sulfatases. Increases the access of these substrates to the intracellular sites where they are metabolized by the deiodinases. Other potential substrates, such as triiodothyronine (T3), 17-beta-glucuronosyl estradiol (17beta-estradiol 17-O-(beta-D-glucuronate)), estrone-3-sulfate (E1S) and sulfobromophthalein (BSP) are transported with much lower efficiency. Transports T4 and E1S in a pH-insensitive manner. Facilitates the transport of thyroid hormones across the blood-brain barrier and into glia and neuronal cells in the brain. The sequence is that of Solute carrier organic anion transporter family member 1C1 (SLCO1C1) from Homo sapiens (Human).